Here is a 318-residue protein sequence, read N- to C-terminus: Aspartate carbamoyltransferase catalytic subunit (318 aa).

The carbamoyl phosphate site is built by R56 and T57. K84 contributes to the L-aspartate binding site. Positions 106, 143, and 146 each coordinate carbamoyl phosphate. R176 and R230 together coordinate L-aspartate. Carbamoyl phosphate contacts are provided by G271 and P272.

It belongs to the aspartate/ornithine carbamoyltransferase superfamily. ATCase family. In terms of assembly, heterododecamer (2C3:3R2) of six catalytic PyrB chains organized as two trimers (C3), and six regulatory PyrI chains organized as three dimers (R2).

It catalyses the reaction carbamoyl phosphate + L-aspartate = N-carbamoyl-L-aspartate + phosphate + H(+). It functions in the pathway pyrimidine metabolism; UMP biosynthesis via de novo pathway; (S)-dihydroorotate from bicarbonate: step 2/3. Its function is as follows. Catalyzes the condensation of carbamoyl phosphate and aspartate to form carbamoyl aspartate and inorganic phosphate, the committed step in the de novo pyrimidine nucleotide biosynthesis pathway. This chain is Aspartate carbamoyltransferase catalytic subunit, found in Mycobacterium avium (strain 104).